We begin with the raw amino-acid sequence, 357 residues long: Histidinol-phosphate aminotransferase 2 (357 aa).

Lys215 is subject to N6-(pyridoxal phosphate)lysine.

The protein belongs to the class-II pyridoxal-phosphate-dependent aminotransferase family. Histidinol-phosphate aminotransferase subfamily. Homodimer. It depends on pyridoxal 5'-phosphate as a cofactor.

It catalyses the reaction L-histidinol phosphate + 2-oxoglutarate = 3-(imidazol-4-yl)-2-oxopropyl phosphate + L-glutamate. Its pathway is amino-acid biosynthesis; L-histidine biosynthesis; L-histidine from 5-phospho-alpha-D-ribose 1-diphosphate: step 7/9. The sequence is that of Histidinol-phosphate aminotransferase 2 from Thiobacillus denitrificans (strain ATCC 25259 / T1).